Here is a 32-residue protein sequence, read N- to C-terminus: MEAFAYVLILTLAVVTLFFAVAFRDPPKFDRK.

A helical membrane pass occupies residues 3-23 (AFAYVLILTLAVVTLFFAVAF).

The protein belongs to the PsbT family. As to quaternary structure, PSII is composed of 1 copy each of membrane proteins PsbA, PsbB, PsbC, PsbD, PsbE, PsbF, PsbH, PsbI, PsbJ, PsbK, PsbL, PsbM, PsbT, PsbX, PsbY, Psb30/Ycf12, peripheral proteins PsbO, CyanoQ (PsbQ), PsbU, PsbV and a large number of cofactors. It forms dimeric complexes.

It localises to the cellular thylakoid membrane. Found at the monomer-monomer interface of the photosystem II (PS II) dimer, plays a role in assembly and dimerization of PSII. PSII is a light-driven water plastoquinone oxidoreductase, using light energy to abstract electrons from H(2)O, generating a proton gradient subsequently used for ATP formation. This chain is Photosystem II reaction center protein T, found in Prochlorococcus marinus (strain MIT 9301).